The chain runs to 95 residues: MALRPLHDRVIVKRLDNERKTASGIVIPDSAAEKPDQGEVVAVGPGKKTEDGKILPVDLKAGDKVLFGKYAGQTVKVDGEELLVIREDEILAVIQ.

This sequence belongs to the GroES chaperonin family. In terms of assembly, heptamer of 7 subunits arranged in a ring. Interacts with the chaperonin GroEL.

The protein resides in the cytoplasm. Functionally, together with the chaperonin GroEL, plays an essential role in assisting protein folding. The GroEL-GroES system forms a nano-cage that allows encapsulation of the non-native substrate proteins and provides a physical environment optimized to promote and accelerate protein folding. GroES binds to the apical surface of the GroEL ring, thereby capping the opening of the GroEL channel. In Bordetella bronchiseptica (strain ATCC BAA-588 / NCTC 13252 / RB50) (Alcaligenes bronchisepticus), this protein is Co-chaperonin GroES.